A 744-amino-acid polypeptide reads, in one-letter code: Vesicle-fusing ATPase (744 aa).

Lys105 is modified (N6-acetyllysine). Ser207 carries the phosphoserine modification. Tyr259 carries the post-translational modification Phosphotyrosine. ATP is bound by residues 505–510 (NGIIKW) and 545–552 (PHSGKTAL). Thr550 contacts Mg(2+). Position 569 is a phosphoserine; by CDK16 (Ser569).

It belongs to the AAA ATPase family. Homohexamer. Interacts with GABARAP and GABARAPL2. Interacts with GRIA2. Interacts with PLK2, leading to disrupt the interaction with GRIA2. Interacts with MUSK; may regulate MUSK endocytosis and activity. Interacts with CDK16. The cofactor is Mg(2+). Phosphorylation at Ser-569 interferes with homohexamerization.

It localises to the cytoplasm. It carries out the reaction ATP + H2O = ADP + phosphate + H(+). Functionally, required for vesicle-mediated transport. Catalyzes the fusion of transport vesicles within the Golgi cisternae. Is also required for transport from the endoplasmic reticulum to the Golgi stack. Seems to function as a fusion protein required for the delivery of cargo proteins to all compartments of the Golgi stack independent of vesicle origin. Interaction with AMPAR subunit GRIA2 leads to influence GRIA2 membrane cycling. The protein is Vesicle-fusing ATPase (NSF) of Cricetulus griseus (Chinese hamster).